A 100-amino-acid polypeptide reads, in one-letter code: Large ribosomal subunit protein uL23 (100 aa).

This sequence belongs to the universal ribosomal protein uL23 family. As to quaternary structure, part of the 50S ribosomal subunit. Contacts protein L29, and trigger factor when it is bound to the ribosome.

Functionally, one of the early assembly proteins it binds 23S rRNA. One of the proteins that surrounds the polypeptide exit tunnel on the outside of the ribosome. Forms the main docking site for trigger factor binding to the ribosome. This is Large ribosomal subunit protein uL23 from Thermotoga sp. (strain RQ2).